The following is a 417-amino-acid chain: Gamma-glutamyl phosphate reductase (417 aa).

The protein belongs to the gamma-glutamyl phosphate reductase family.

Its subcellular location is the cytoplasm. It carries out the reaction L-glutamate 5-semialdehyde + phosphate + NADP(+) = L-glutamyl 5-phosphate + NADPH + H(+). Its pathway is amino-acid biosynthesis; L-proline biosynthesis; L-glutamate 5-semialdehyde from L-glutamate: step 2/2. Functionally, catalyzes the NADPH-dependent reduction of L-glutamate 5-phosphate into L-glutamate 5-semialdehyde and phosphate. The product spontaneously undergoes cyclization to form 1-pyrroline-5-carboxylate. This is Gamma-glutamyl phosphate reductase from Escherichia coli (strain SMS-3-5 / SECEC).